A 147-amino-acid chain; its full sequence is Thyrotropin subunit beta (147 aa).

A signal peptide spans 1-20; the sequence is MRVVLLASGVLCLLAGQVLS. 6 disulfides stabilise this stretch: Cys-22–Cys-72, Cys-36–Cys-87, Cys-39–Cys-126, Cys-47–Cys-103, Cys-51–Cys-105, and Cys-108–Cys-115. An N-linked (GlcNAc...) asparagine glycan is attached at Asn-43.

Belongs to the glycoprotein hormones subunit beta family. As to quaternary structure, heterodimer of a common alpha chain and a unique beta chain which confers biological specificity to thyrotropin, lutropin, follitropin and gonadotropin.

Its subcellular location is the secreted. Indispensable for the control of thyroid structure and metabolism. May play some role in the biological processes of the immature fishes. The polypeptide is Thyrotropin subunit beta (tshb) (Anguilla japonica (Japanese eel)).